Consider the following 129-residue polypeptide: Small ribosomal subunit protein uS11 (129 aa).

The protein belongs to the universal ribosomal protein uS11 family. In terms of assembly, part of the 30S ribosomal subunit. Interacts with proteins S7 and S18. Binds to IF-3.

In terms of biological role, located on the platform of the 30S subunit, it bridges several disparate RNA helices of the 16S rRNA. Forms part of the Shine-Dalgarno cleft in the 70S ribosome. The polypeptide is Small ribosomal subunit protein uS11 (Bartonella henselae (strain ATCC 49882 / DSM 28221 / CCUG 30454 / Houston 1) (Rochalimaea henselae)).